The sequence spans 488 residues: Ribulose bisphosphate carboxylase large chain (488 aa).

Substrate contacts are provided by Asn127 and Thr177. Lys179 acts as the Proton acceptor in catalysis. Residue Lys181 participates in substrate binding. Residues Lys205, Asp207, and Glu208 each coordinate Mg(2+). Lys205 carries the post-translational modification N6-carboxylysine. The Proton acceptor role is filled by His297. Substrate-binding residues include Arg298, His330, and Ser382.

This sequence belongs to the RuBisCO large chain family. Type I subfamily. Heterohexadecamer of 8 large chains and 8 small chains. It depends on Mg(2+) as a cofactor.

The protein resides in the plastid. It is found in the chloroplast. The enzyme catalyses 2 (2R)-3-phosphoglycerate + 2 H(+) = D-ribulose 1,5-bisphosphate + CO2 + H2O. The catalysed reaction is D-ribulose 1,5-bisphosphate + O2 = 2-phosphoglycolate + (2R)-3-phosphoglycerate + 2 H(+). Its function is as follows. RuBisCO catalyzes two reactions: the carboxylation of D-ribulose 1,5-bisphosphate, the primary event in carbon dioxide fixation, as well as the oxidative fragmentation of the pentose substrate in the photorespiration process. Both reactions occur simultaneously and in competition at the same active site. This Pyropia haitanensis (Red seaweed) protein is Ribulose bisphosphate carboxylase large chain (rbcL).